A 115-amino-acid polypeptide reads, in one-letter code: Large ribosomal subunit protein bL35m (115 aa).

This sequence belongs to the bacterial ribosomal protein bL35 family.

It localises to the mitochondrion. This Saccharomyces cerevisiae (strain YJM789) (Baker's yeast) protein is Large ribosomal subunit protein bL35m.